We begin with the raw amino-acid sequence, 257 residues long: Uracil phosphoribosyltransferase homolog (257 aa).

GTP is bound by residues R81, R90, and 124-127; that span reads EKGN. R134 provides a ligand contact to 5-phospho-alpha-D-ribose 1-diphosphate. Positions 151 and 180 each coordinate GTP. 186–194 contacts 5-phospho-alpha-D-ribose 1-diphosphate; that stretch reads YPILSTGNT. 247 to 249 provides a ligand contact to uracil; the sequence is THF.

It belongs to the UPRTase family.

It is found in the cytoplasm. It localises to the nucleus. The chain is Uracil phosphoribosyltransferase homolog (uprt) from Danio rerio (Zebrafish).